A 108-amino-acid chain; its full sequence is Large ribosomal subunit protein uL24 (108 aa).

This sequence belongs to the universal ribosomal protein uL24 family. In terms of assembly, part of the 50S ribosomal subunit.

Functionally, one of two assembly initiator proteins, it binds directly to the 5'-end of the 23S rRNA, where it nucleates assembly of the 50S subunit. One of the proteins that surrounds the polypeptide exit tunnel on the outside of the subunit. In Frankia casuarinae (strain DSM 45818 / CECT 9043 / HFP020203 / CcI3), this protein is Large ribosomal subunit protein uL24.